The following is a 123-amino-acid chain: Small ribosomal subunit protein uS12cz/uS12cy (123 aa).

This sequence belongs to the universal ribosomal protein uS12 family. As to quaternary structure, part of the 30S ribosomal subunit.

It localises to the plastid. It is found in the chloroplast. In terms of biological role, with S4 and S5 plays an important role in translational accuracy. Located at the interface of the 30S and 50S subunits. The chain is Small ribosomal subunit protein uS12cz/uS12cy (rps12-A) from Psilotum nudum (Whisk fern).